The primary structure comprises 512 residues: Tabersonine 16-hydroxylase 2 (512 aa).

Position 1 (Met-1) is a topological domain, lumenal. The chain crosses the membrane as a helical span at residues 2–22 (ELYYFSTFAFLLFCFILAKTL). Residues 23-512 (KKSGQSNLKL…YSASSLKGKY (490 aa)) lie on the Cytoplasmic side of the membrane. Cys-445 serves as a coordination point for heme.

This sequence belongs to the cytochrome P450 family. Heme serves as cofactor. Expressed at low levels in roots, fruits, stems, flower buds and flowers, but highly expressed in young leaves. Detected in adaxial and abaxial epidermis cells.

The protein resides in the endoplasmic reticulum membrane. The enzyme catalyses (-)-tabersonine + reduced [NADPH--hemoprotein reductase] + O2 = 16-hydroxytabersonine + oxidized [NADPH--hemoprotein reductase] + H2O + H(+). In terms of biological role, involved in the foliar biosynthesis of vindoline, a precursor of vinblastine and vincristine. Hydroxylates specifically tabersonine, 2,3-dihydrotabersonine and 2,3-dihydro-3-hydroxytabersonine, but has no activity with naringenin, tryptamine, secologanin, strictosidine, ajmalicine, vindoline and catharanthine. The polypeptide is Tabersonine 16-hydroxylase 2 (Catharanthus roseus (Madagascar periwinkle)).